Consider the following 512-residue polypeptide: Cytochrome P450 monooxygenase poxM (512 aa).

A helical membrane pass occupies residues 15-35 (LLKGATIALSFFSLYLFGLVI). Cys449 contributes to the heme binding site.

The protein belongs to the cytochrome P450 family. It depends on heme as a cofactor.

Its subcellular location is the membrane. It participates in secondary metabolite biosynthesis. Cytochrome P450 monooxygenase; part of the gene cluster that mediates the biosynthesis of oxaleimides, cytotoxic compounds containing an unusual disubstituted succinimide moiety. The first step of the pathway is provided by the HR-PKS poxF that serves in a new mode of collaborative biosynthesis with the PKS-NRPS poxE, by providing the olefin containing amino acid substrate via the synthesis of an ACP-bound dec-4-enoate. The cytochrome P450 monooxygenase poxM-catalyzed oxidation at the alpha-position creates the enzyme-bound 2-hydroxydec-4-enoyl-ACP thioester, which may be prone to spontaneous hydrolysis to yield 2-hydroxydec-4-enoic acid due to increased electrophilicity of the carbonyl. 2-hydroxydec-4-enoic acid can then be further oxidized by poxM to yield the alpha-ketoacid 2-oxodec-4-enoicacid, which is reductively aminated by the aminotransferase poxL to yield (S,E)-2-aminodec-4-enoic acid. The Hybrid PKS-NRPS synthetase poxE then performs condensation between the octaketide product of its PKS modules and the amino group of (S,E)-2-aminodec-4-enoic acid which is activated and incorporated by the adenylation domain. The resulting aminoacyl product can be cyclized by the Diels-Alderase PoxQ and reductively released by the reductive (R) domain of poxE to yield an aldehyde intermediate. The released aldehyde is then substrate for a Knoevenagel condensation by the hydrolyase poxO followed by an oxidation at the 5-position of the pyrrolidone ring. The presence of the olefin from the amino acid building block allows for migration of the substituted allyl group to occur. This allylic transposition reaction takes place in a conjugate addition, semipinacol-like fashion to yield a succinimide intermediate. Iterative two-electron oxidations of the C7 methyl of the succinimide intermediate to the carboxylic acid can be catalyzed by one of two remaining cytochrome P450 monooxygenasess poxC or poxD to yield oxaleimide A. Subsequent oxidation yields the maleimide scaffold oxaleimide I. Both oxaleimide A and oxaleimide I can undergo oxidative modifications in the decalin ring to yield the series of products oxaleimides B to H. The sequence is that of Cytochrome P450 monooxygenase poxM from Penicillium oxalicum (strain 114-2 / CGMCC 5302) (Penicillium decumbens).